The sequence spans 283 residues: Serine protease 57 (283 aa).

An N-terminal signal peptide occupies residues 1 to 31; sequence MGLGLRGWGRPLLTVATALMLPVKPPAGSWG. The Peptidase S1 domain occupies 34–263; that stretch reads IIGGHEVTPH…FVAWIWDVVR (230 aa). Cysteines 59 and 75 form a disulfide. Catalysis depends on charge relay system residues His-74 and Asp-122. N-linked (GlcNAc...) asparagine glycosylation is found at Asn-129 and Asn-189. 3 disulfide bridges follow: Cys-157–Cys-224, Cys-188–Cys-202, and Cys-214–Cys-239. The active-site Charge relay system is Ser-218.

The protein belongs to the peptidase S1 family. After cleavage of the signal peptide, the N-terminus is probably further processed by CTSC. Processing by CTSC is probably required for accumulation in cytoplasmic granules; in the absence of CTSC the protein does not accumulate. Post-translationally, N-glycosylated. As to expression, detected in peripheral blood neutrophil granulocytes, but not in other types of leukocytes. Detected in neutrophils and neutrophil precursors in bone marrow (at protein level). Detected in myeloblasts and promyelocytes in bone marrow.

It localises to the cytoplasmic granule lumen. It is found in the secreted. Inhibited by SERPINA1, SERPINC1 and SERPING1. Serine protease that cleaves preferentially after Arg residues. Can also cleave after citrulline (deimidated arginine) and methylarginine residues. This is Serine protease 57 (PRSS57) from Homo sapiens (Human).